We begin with the raw amino-acid sequence, 323 residues long: HTH-type transcriptional regulator CysB (323 aa).

The region spanning 1-60 (MKMHQLRYIVEIVNQNLNVTEAANALYTSQPGISKQVRLLEDELGLEIFERHGKHIKSIT) is the HTH lysR-type domain. The segment at residues 19–38 (VTEAANALYTSQPGISKQVR) is a DNA-binding region (H-T-H motif).

The protein belongs to the LysR transcriptional regulatory family. Homotetramer.

Its subcellular location is the cytoplasm. In terms of biological role, this protein is a positive regulator of gene expression for the cysteine regulon. The inducer for CysB is N-acetylserine. The sequence is that of HTH-type transcriptional regulator CysB (cysB) from Haemophilus influenzae (strain ATCC 51907 / DSM 11121 / KW20 / Rd).